The following is a 283-amino-acid chain: uncharacterized protein (283 aa).

The interval 1-21 (MSAYTHPMERELSGLSSRGNS) is disordered. A helical membrane pass occupies residues 41–61 (SIFIASLVTFGVLMITLLIAL).

Belongs to the APS1/VSP family.

The protein resides in the membrane. This is an uncharacterized protein from Arabidopsis thaliana (Mouse-ear cress).